Consider the following 451-residue polypeptide: Putative metabolite transport protein YyaJ (451 aa).

At 1–29 (MNTIFKQKNTHPFSNAANRLDRLPISRVH) the chain is on the cytoplasmic side. The helical transmembrane segment at 30 to 50 (FQVLTALGIVYFFDLADLFTL) threads the bilayer. The Extracellular portion of the chain corresponds to 51–60 (SNVAPALIEH). The chain crosses the membrane as a helical span at residues 61-81 (WGIPLSTIANVTAASFLGMFL). The Cytoplasmic portion of the chain corresponds to 82–97 (GASLGGRLSDRIGRKK). A helical transmembrane segment spans residues 98-118 (ALNLFVFVFSIASLCNAAAWD). Topologically, residues 119 to 124 (IPSLMT) are extracellular. The chain crosses the membrane as a helical span at residues 125-145 (FRFLTGFGVAAAMVITNSYLA). Residues 146–157 (EFFPSSVRGKYI) are Cytoplasmic-facing. A helical transmembrane segment spans residues 158–178 (SFCAMIGLIGVPITNIVSAFV). Over 179–182 (IPLG) the chain is Extracellular. Residues 183 to 203 (SWGWRLVFVWGAVGLIYFFFI) form a helical membrane-spanning segment. The Cytoplasmic portion of the chain corresponds to 204-270 (HRLEESPRWH…LLKGRNLKIT (67 aa)). Residues 271-291 (IVLSAVWIFETFGFYGFASWV) traverse the membrane as a helical segment. At 292 to 305 (PSLLKSNGVTMENT) the chain is on the extracellular side. A helical transmembrane segment spans residues 306–326 (LWYNVLHSVGAPLGALLGSMI). Residues 327–333 (SERFQRK) are Cytoplasmic-facing. The helical transmembrane segment at 334–354 (WILAASAFLTAIAGLLYGMTF) threads the bilayer. Residues 355–357 (IPI) lie on the Extracellular side of the membrane. Residues 358 to 378 (MIIVFGFIVNITERVFTSNLY) traverse the membrane as a helical segment. At 379–396 (AYTSEPYPTEYRSSGSGL) the chain is on the cytoplasmic side. The helical transmembrane segment at 397–417 (AYGLGRFSNIFGSLLVGFIAV) threads the bilayer. At 418–421 (QLGY) the chain is on the extracellular side. A helical membrane pass occupies residues 422–442 (ISVFLFIGGCWLACSLLLIFF). At 443–451 (GPNTNAKQI) the chain is on the cytoplasmic side.

It belongs to the major facilitator superfamily. Sugar transporter (TC 2.A.1.1) family.

It localises to the cell membrane. This Bacillus subtilis (strain 168) protein is Putative metabolite transport protein YyaJ (yyaJ).